The following is a 556-amino-acid chain: Guanine nucleotide-binding protein-like 3 homolog (556 aa).

The interval 29 to 50 (NRKVKKEAKKNGTTNKKEKTIS) is disordered. A coiled-coil region spans residues 58–95 (KEEILVQAEQEREKIKVRQEAAKEAAKIHRIEKRKNNL). One can recognise a CP-type G domain in the interval 138-317 (ASEVRKTVEI…LIDSPGVILV (180 aa)). GTP is bound by residues 184 to 187 (NKID), 266 to 273 (GFPNVGKS), and 310 to 313 (DSPG). Disordered stretches follow at residues 461–508 (APHN…PESL) and 525–556 (KKQKKKSKKTANRADKLSDSLGNMLGGDAMEM). Residues 466–478 (DEEEDDDDEMETD) are compositionally biased toward acidic residues. The segment covering 525-535 (KKQKKKSKKTA) has biased composition (basic residues).

Belongs to the TRAFAC class YlqF/YawG GTPase family.

It is found in the nucleus. Functionally, may play a role in regulating cellular proliferation in both germline and somatic tissues. In Caenorhabditis elegans, this protein is Guanine nucleotide-binding protein-like 3 homolog.